The sequence spans 363 residues: Circumsporozoite protein (363 aa).

The signal sequence occupies residues 1-22 (MKNFILLAVSSILLVDLLPTHF). Polar residues predominate over residues 48-57 (GAQQVRQSAS). A disordered region spans residues 48–278 (GAQQVRQSAS…GQNNQGANAP (231 aa)). The segment covering 61–96 (GLGEKPKEGADKEKKKEKGKEKEEEPKKPNENKLKQ) has biased composition (basic and acidic residues). Residues 80–88 (KEKEEEPKK) form a required for the binding to heparan sulfate proteoglycans (HSPGs) on the surface of host hepatocytes region. Positions 93–97 (KLKQP) are region I; contains the proteolytic cleavage site. A 1; approximate repeat occupies 98-109 (NEGQPQAQGDGA). The segment at 98 to 241 (NEGQPQAQGD…GQPQAQGDGA (144 aa)) is 12 X 12 AA approximate tandem repeats of N-A-G-Q-P-Q-A-Q-G-D-G-A. 11 repeat units span residues 110-121 (NAGQPQAQGDGA), 122-133 (NAGQPQAQGDGA), 134-145 (NAGQPQAQGDGA), 146-157 (NAGQPQAQGDGA), 158-169 (NAGQPQAQGDGA), 170-181 (NAGQPQAQGDGA), 182-193 (NAGQPQAQGDGA), 194-205 (NAGQPQAQGDGA), 206-217 (NAGQPQAQGDGA), 218-229 (NAGQPQAQGDGA), and 230-241 (NAGQPQAQGDGA). Gly residues predominate over residues 248-259 (RNGGGAPAGGNE). Residues 260-277 (GNKQAGKGQGQNNQGANA) are compositionally biased toward low complexity. Positions 289–341 (KIRSSVTTEWTPCSVTCGNGVRIRRKAHAGNKKAEDLTMDDLEVEACVMDKCA) constitute a TSP type-1 domain. Intrachain disulfides connect Cys-301–Cys-335 and Cys-305–Cys-340. A glycan (O-linked (Fuc) threonine) is linked at Thr-304. Cys-340 carries the GPI-anchor amidated cysteine lipid modification. The propeptide at 341-363 (AGIFNVVSNSLGLVILLVLALFN) is removed in mature form.

The protein belongs to the plasmodium circumsporozoite protein family. Post-translationally, during host cell invasion, proteolytically cleaved at the cell membrane in the region I by a papain-like cysteine protease of parasite origin. Cleavage is triggered by the sporozoite contact with highly sulfated heparan sulfate proteoglycans (HSPGs) present on the host hepatocyte cell surface. Cleavage exposes the TSP type-1 (TSR) domain and is required for productive invasion of host hepatocytes but not for adhesion to the host cell membrane. Cleavage is dispensable for sporozoite development in the oocyst, motility and for traversal of host and vector cells. O-glycosylated; maybe by POFUT2.

The protein localises to the cell membrane. It is found in the cytoplasm. Its function is as follows. Essential sporozoite protein. In the mosquito vector, required for sporozoite development in the oocyst, migration through the vector hemolymph and entry into the vector salivary glands. In the vertebrate host, required for sporozoite migration through the host dermis and infection of host hepatocytes. Binds to highly sulfated heparan sulfate proteoglycans (HSPGs) on the surface of host hepatocytes. In the vertebrate host, binds to highly sulfated heparan sulfate proteoglycans (HSPGs) on the surface of host hepatocytes and is required for sporozoite invasion of the host hepatocytes. This Plasmodium knowlesi (strain H) protein is Circumsporozoite protein.